The primary structure comprises 157 residues: Probable succinate transporter subunit YjjB (157 aa).

Helical transmembrane passes span 8 to 28 (FALA…AMVF), 57 to 77 (LNIE…GIQW), 87 to 107 (VFTV…TAMI), and 129 to 149 (FLTA…PGLW).

It belongs to the ThrE exporter (TC 2.A.79) family. In terms of assembly, the transporter is composed of YjjB and YjjP.

It localises to the cell inner membrane. Involved in succinate export with YjjP. Both proteins are required for export. The protein is Probable succinate transporter subunit YjjB of Shigella boydii serotype 4 (strain Sb227).